The chain runs to 1123 residues: Rabphilin-1 (1123 aa).

The span at 1 to 17 shows a compositional bias: basic residues; that stretch reads MTKSTKLRHCKQKKKKP. Disordered stretches follow at residues 1 to 56 and 88 to 140; these read MTKS…GSRS and SAHN…PSTH. The span at 36–46 shows a compositional bias: low complexity; sequence DAATTTSTTDA. Residues 215–341 form the RabBD domain; sequence KAQTGSITAA…KKSGAWFYKE (127 aa). The segment at 263 to 328 adopts an FYVE-type zinc-finger fold; that stretch reads GNGVTHCLLC…LCKICSEARE (66 aa). Residues C269, C272, C288, C291, C296, C300, C320, and C323 each contribute to the Zn(2+) site. Composition is skewed to polar residues over residues 365-375, 387-400, 410-428, and 487-497; these read PNASSAATPLS, TMPSTSSCQMTTPK, PGLQMNGGPTSPLPNGTRR, and ASSSDGESFVQ. Disordered stretches follow at residues 365–710, 737–779, and 796–818; these read PNAS…VGSA, TSRA…LRTS, and HIVSSEPTSSTTSNQNHTSVPIP. Positions 531–541 are enriched in basic and acidic residues; the sequence is SRREANMERFS. Over residues 563–574 the composition is skewed to low complexity; sequence ESRPSTRSTSPR. 2 stretches are compositionally biased toward polar residues: residues 605-632 and 649-666; these read VVQSDHSNPQQSGLTCSSSSLTPLQQQA and PDRTTSRVAQSASGTSLV. Positions 742 to 753 are enriched in low complexity; sequence SPLAASSSFLSS. Residues 756-768 show a composition bias toward basic and acidic residues; it reads DDTKQKNRRRDGV. The span at 803 to 818 shows a compositional bias: low complexity; sequence TSSTTSNQNHTSVPIP. C2 domains lie at 844-967 and 984-1103; these read SLGS…NLYL and DRGK…RQWI. 10 residues coordinate Ca(2+): D875, D881, D936, D938, D943, D1015, D1021, D1075, D1077, and D1083.

It depends on Ca(2+) as a cofactor.

It is found in the synapse. Functionally, rab-3 effector. This is Rabphilin-1 (rbf-1) from Caenorhabditis elegans.